The sequence spans 339 residues: Serpentine receptor class alpha-24 (339 aa).

The next 7 helical transmembrane spans lie at 26–46 (ITVK…YYFA), 65–82 (LILL…TTML), 112–132 (ELFV…SLAF), 151–171 (VSIF…YVGL), 199–219 (FRTL…YLSV), 248–268 (VCIL…GVNY), and 284–304 (LAPF…VIHC).

It belongs to the nematode receptor-like protein sra family.

It is found in the membrane. The protein is Serpentine receptor class alpha-24 (sra-24) of Caenorhabditis elegans.